Here is a 356-residue protein sequence, read N- to C-terminus: Carbohydrate sulfotransferase 10 (356 aa).

The Cytoplasmic segment spans residues 1–6; sequence MHHQWL. A helical; Signal-anchor for type II membrane protein membrane pass occupies residues 7–27; that stretch reads LLAACFWVIFMFMVASKFITL. Residues 28 to 356 are Lumenal-facing; it reads TFKDPDGYSA…GYQKPDFLLN (329 aa). A glycan (N-linked (GlcNAc...) asparagine) is linked at Asn99. 3'-phosphoadenylyl sulfate is bound by residues 127 to 133 and 189 to 197; these read PKVGNTQ and RDPFERLIS. Asn228 and Asn316 each carry an N-linked (GlcNAc...) asparagine glycan.

This sequence belongs to the sulfotransferase 2 family. As to expression, in myogenic progenitors, it is ubiquitously expressed.

It localises to the golgi apparatus membrane. The enzyme catalyses 3-O-{beta-D-GlcA-(1-&gt;[3)-alpha-D-Xyl-(1-&gt;3)-beta-D-GlcA-(1-&gt;](n)-4)-beta-D-Xyl-(1-&gt;4)-Rib-ol-P-Rib-ol-P-3-beta-D-GalNAc-(1-&gt;3)-beta-D-GlcNAc-(1-&gt;4)-O-6-P-alpha-D-Man}-L-Thr-[protein] + 3'-phosphoadenylyl sulfate = 3-O-{O-3-S-beta-D-GlcA-(1-&gt;[3)-alpha-D-Xyl-(1-&gt;3)-beta-D-GlcA-(1-&gt;](n)-4)-beta-D-Xyl-(1-&gt;4)-Rib-ol-P-Rib-ol-P-3-beta-D-GalNAc-(1-&gt;3)-beta-D-GlcNAc-(1-&gt;4)-O-6-P-alpha-D-Man}-L-Thr-[protein] + adenosine 3',5'-bisphosphate + H(+). It catalyses the reaction 17beta-estradiol 3-O-(beta-D-glucuronate) + 3'-phosphoadenylyl sulfate = 17beta-estradiol 3-O-(3-sulfo-beta-D-glucuronate) + adenosine 3',5'-bisphosphate + H(+). It carries out the reaction 17beta-estradiol 3-O-(beta-D-glucuronate) 17-sulfate + 3'-phosphoadenylyl sulfate = 17beta-estradiol 3-O-(3-sulfo-beta-D-glucuronate) 17-sulfate + adenosine 3',5'-bisphosphate + H(+). The catalysed reaction is 17beta-estradiol 17-O-(beta-D-glucuronate) + 3'-phosphoadenylyl sulfate = 17beta-estradiol 17-O-(3-sulfo-beta-D-glucuronate) + adenosine 3',5'-bisphosphate + H(+). The enzyme catalyses 16alpha,17beta-estriol 3-O-(beta-D-glucuronate) + 3'-phosphoadenylyl sulfate = 16alpha,17beta-estriol 3-O-(3-sulfo-beta-D-glucuronate) + adenosine 3',5'-bisphosphate + H(+). It catalyses the reaction 16alpha,17beta-estriol 16-O-(beta-D-glucuronate) + 3'-phosphoadenylyl sulfate = 16alpha,17beta-estriol 16-O-(3-sulfo-beta-D-glucuronate) + adenosine 3',5'-bisphosphate + H(+). It carries out the reaction 16alpha,17beta-estriol 17-O-(beta-D-glucuronate) + 3'-phosphoadenylyl sulfate = 16alpha,17beta-estriol 17-O-(3-sulfo-beta-D-glucuronate) + adenosine 3',5'-bisphosphate + H(+). The catalysed reaction is estrone 3-O-(beta-D-glucuronate) + 3'-phosphoadenylyl sulfate = estrone 3-O-(3-sulfo-beta-D-glucuronate) + adenosine 3',5'-bisphosphate + H(+). The enzyme catalyses 3alpha,20alpha-dihydroxy-5beta-pregnane 3-O-(beta-D-glucuronate) + 3'-phosphoadenylyl sulfate = 3alpha,20alpha-dihydroxy-5beta-pregnane 3-O-(3-sulfo-beta-D-glucuronate) + adenosine 3',5'-bisphosphate + H(+). It catalyses the reaction testosterone 17-O-(beta-D-glucuronate) + 3'-phosphoadenylyl sulfate = testosterone 17-O-(3-sulfo-beta-D-glucuronate) + adenosine 3',5'-bisphosphate + H(+). It carries out the reaction 3beta-androst-5-en-17-one 3-O-(beta-D-glucuronate) + 3'-phosphoadenylyl sulfate = 3beta-androst-5-en-17-one 3-O-(3-sulfo-beta-D-glucuronate) + adenosine 3',5'-bisphosphate + H(+). The catalysed reaction is 3alpha,17alpha-dihydroxy-5beta-androstane-11-one-17beta-carboxylate 3-O-(beta-D-glucuronate) + 3'-phosphoadenylyl sulfate = 3alpha,17alpha-dihydroxy-5beta-androstane-11-one-17beta-carboxylate 3-O-(3-sulfo-beta-D-glucuronate) + adenosine 3',5'-bisphosphate + H(+). The enzyme catalyses 3alpha-hydroxyetiocholan-17-one 3-O-(beta-D-glucuronate) + 3'-phosphoadenylyl sulfate = 3alpha-hydroxyetiocholan-17-one 3-O-(3-sulfo-beta-D-glucuronate) + adenosine 3',5'-bisphosphate + H(+). It participates in steroid metabolism. The protein operates within protein modification; carbohydrate sulfation. Functionally, catalyzes the transfer of sulfate from 3'-phosphoadenylyl sulfate (PAPS) to position 3 of terminal glucuronic acid of both protein- and lipid-linked oligosaccharides. Participates in biosynthesis of HNK-1 carbohydrate structure 3-O-sulfo-beta-D-GlcA-(1-&gt;3)-beta-D-Gal-(1-&gt;4)-D-GlcNAc-R, a sulfated glucuronyl-lactosaminyl residue carried by many neural recognition molecules, which is involved in cell interactions during ontogenetic development and in synaptic plasticity in the adult. May be indirectly involved in synapse plasticity of the hippocampus, via its role in HNK-1 biosynthesis. Sulfates terminal glucuronyl residue of the laminin globular (LG)-domain binding epitope on DAG1/alpha-dystroglycan and prevents further polymerization by LARGE1 glycosyltransferase. Likely defines the chain length of LG epitope, conferring binding specificity to extracellular matrix components. Plays a role in down-regulating the steroid hormones. Sulfates glucuronidated estrogens and androgens with an impact in hormone cycle and fertility. Has a preference for glucuronyl moiety at the 3-hydroxyl group of a sterol ring rather than the 17-hydroxyl group, showing high catalytic efficiency for 17beta-estradiol 3-O-(beta-D-glucuronate) and dehydroepiandrosterone 3-O-(beta-D-glucuronate) hormones. This chain is Carbohydrate sulfotransferase 10 (Chst10), found in Rattus norvegicus (Rat).